Consider the following 342-residue polypeptide: Strictosidine synthase (342 aa).

The signal sequence occupies residues 1-20 (KLSDSQTMALFTVFLLFLSS). Asn89 carries N-linked (GlcNAc...) asparagine glycosylation.

Belongs to the strictosidine synthase family. In terms of assembly, monomer.

The protein localises to the vacuole. The catalysed reaction is 3alpha(S)-strictosidine + H2O = secologanin + tryptamine. The protein operates within alkaloid biosynthesis; 3alpha(S)-strictosidine biosynthesis; 3alpha(S)-strictosidine from secologanin and tryptamine: step 1/1. In terms of biological role, catalyzes the stereospecific condensation of tryptamine with secologanin to form strictosidine, the key intermediate of indole alkaloid biosynthesis. The protein is Strictosidine synthase (STR1) of Rauvolfia mannii.